The chain runs to 387 residues: Lactosylceramide alpha-2,3-sialyltransferase (387 aa).

Topologically, residues 1–33 (MPNEFTSAKLRSDCSRTSLQWYTQTQHKMRRPS) are cytoplasmic. A helical; Signal-anchor for type II membrane protein transmembrane segment spans residues 34–54 (LLLKDILKCMLVVFGVWLLYI). The Extracellular portion of the chain corresponds to 55–387 (LKLNYTAEEC…VVQDLSGGIH (333 aa)). N-linked (GlcNAc...) asparagine glycosylation is found at asparagine 58 and asparagine 208. Cysteine 167 and cysteine 325 are oxidised to a cystine.

The protein belongs to the glycosyltransferase 29 family.

It is found in the golgi apparatus membrane. It catalyses the reaction a beta-D-Gal-(1-&gt;4)-beta-D-Glc-(1&lt;-&gt;1)-Cer(d18:1(4E)) + CMP-N-acetyl-beta-neuraminate = a ganglioside GM3 (d18:1(4E)) + CMP + H(+). The enzyme catalyses ganglioside GA2 (d18:1(4E)/18:0) + CMP-N-acetyl-beta-neuraminate = ganglioside GM2 (d18:1(4E)/18:0) + CMP + H(+). The catalysed reaction is a beta-D-Gal-(1&lt;-&gt;1')-ceramide + CMP-N-acetyl-beta-neuraminate = N-acetyl-alpha-neuraminosyl-(2-&gt;3)-beta-D-galactosyl-(1&lt;-&gt;1')-ceramide + CMP + H(+). It carries out the reaction ganglioside GA1 (d18:1(4E)/18:0) + CMP-N-acetyl-beta-neuraminate = ganglioside GM1 (d18:1(4E)/18:0) + CMP + H(+). In terms of biological role, transfers the sialyl group (N-acetyl-alpha-neuraminyl or NeuAc) from CMP-NeuAc to the non-reducing terminal galactose (Gal) of glycosphingolipids forming gangliosides (important molecules involved in the regulation of multiple cellular processes, including cell proliferation and differentiation, apoptosis, embryogenesis, development, and oncogenesis). Mainly involved in the biosynthesis of ganglioside GM3 but can also use different glycolipids as substrate acceptors such as D-galactosylceramide (GalCer), asialo-GM2 (GA2) and asialo-GM1 (GA1), although less preferentially than beta-D-Gal-(1-&gt;4)-beta-D-Glc-(1&lt;-&gt;1)-Cer (LacCer). This is Lactosylceramide alpha-2,3-sialyltransferase (St3gal5) from Rattus norvegicus (Rat).